A 162-amino-acid chain; its full sequence is NADH-quinone oxidoreductase subunit I 1 (162 aa).

2 consecutive 4Fe-4S ferredoxin-type domains span residues 44 to 74 (LRTY…VQAA) and 90 to 119 (YKYQ…LTQE). 8 residues coordinate [4Fe-4S] cluster: cysteine 54, cysteine 57, cysteine 60, cysteine 64, cysteine 99, cysteine 102, cysteine 105, and cysteine 109.

It belongs to the complex I 23 kDa subunit family. As to quaternary structure, NDH-1 is composed of 14 different subunits. Subunits NuoA, H, J, K, L, M, N constitute the membrane sector of the complex. The cofactor is [4Fe-4S] cluster.

The protein resides in the cell membrane. It catalyses the reaction a quinone + NADH + 5 H(+)(in) = a quinol + NAD(+) + 4 H(+)(out). Functionally, NDH-1 shuttles electrons from NADH, via FMN and iron-sulfur (Fe-S) centers, to quinones in the respiratory chain. The immediate electron acceptor for the enzyme in this species is believed to be ubiquinone. Couples the redox reaction to proton translocation (for every two electrons transferred, four hydrogen ions are translocated across the cytoplasmic membrane), and thus conserves the redox energy in a proton gradient. The protein is NADH-quinone oxidoreductase subunit I 1 of Symbiobacterium thermophilum (strain DSM 24528 / JCM 14929 / IAM 14863 / T).